The sequence spans 427 residues: Transcription termination factor Rho (427 aa).

The 75-residue stretch at 51-125 folds into the Rho RNA-BD domain; sequence LLFMEGVLEI…LHVEAVNGDD (75 aa). ATP-binding positions include 168–173, 180–185, and R211; these read GFGQRG and KAGKTM.

The protein belongs to the Rho family. In terms of assembly, homohexamer. The homohexamer assembles into an open ring structure.

Its function is as follows. Facilitates transcription termination by a mechanism that involves Rho binding to the nascent RNA, activation of Rho's RNA-dependent ATPase activity, and release of the mRNA from the DNA template. In Bacillus subtilis (strain 168), this protein is Transcription termination factor Rho.